The following is a 331-amino-acid chain: GATA transcription factor 12 (331 aa).

Disordered stretches follow at residues 30-49 (ENDVVADSTTTTTITDSSNF) and 105-138 (SGFKSRPDPKSDTGSPENPNSSSPIFTTDVSVPA). The span at 34–47 (VADSTTTTTITDSS) shows a compositional bias: low complexity. The segment covering 116–134 (DTGSPENPNSSSPIFTTDV) has biased composition (polar residues). Positions 139–146 (KARSKRSR) match the Nuclear localization signal motif. Positions 174-218 (SSQQHLSPPTSPPLLMAPLGKKQAVDGGHRRKKDVSSPESGGAEE) are disordered. The segment at 215–269 (GAEERRCLHCATDKTPQWRTGPMGPKTLCNACGVRYKSGRLVPEYRPAASPTFVL) adopts a GATA-type zinc-finger fold.

Belongs to the type IV zinc-finger family. Class A subfamily. As to expression, expressed in the vascular cylinder of roots. Expressed in the differentiation zone of the root stele.

Its subcellular location is the nucleus. Functionally, transcriptional activator that specifically binds 5'-GATA-3' or 5'-GAT-3' motifs within gene promoters. May be involved in the regulation of some light-responsive genes. Transcription activator involved in xylem formation. Functions upstream of NAC030/VND7, a master switch of xylem vessel differentiation. The sequence is that of GATA transcription factor 12 from Arabidopsis thaliana (Mouse-ear cress).